The sequence spans 614 residues: Vitamin B12 transporter BtuB (614 aa).

The first 20 residues, 1–20 (MIKKASLLTACSVTAFSAWA), serve as a signal peptide directing secretion. The short motif at 26 to 33 (DTLVVTAN) is the TonB box element. Residues 38-152 (PRSTVLAPTT…IGGVVNIITT (115 aa)) form the TBDR plug domain. Residues leucine 83, serine 85, asparagine 92, and 110–111 (VS) each bind cyanocob(III)alamin. In terms of domain architecture, TBDR beta-barrel spans 155 to 614 (HPGTEISAGW…EYTLSGSYTF (460 aa)). The next 3 membrane-spanning stretches (beta stranded) occupy residues 158 to 165 (TEISAGWG), 169 to 178 (YQNYDVSTQQ), and 184 to 195 (TRVTLLGDYAHT). Ca(2+) contacts are provided by aspartate 199, glutamine 211, aspartate 213, and aspartate 215. Transmembrane regions (beta stranded) follow at residues 217-227 (FLSKTLYGALE) and 232-248 (DVWS…NRTN). Ca(2+)-binding residues include tyrosine 249 and aspartate 250. Alanine 251 is a binding site for cyanocob(III)alamin. Aspartate 261 is a Ca(2+) binding site. Transmembrane regions (beta stranded) follow at residues 263-277 (RKLY…LRYN), 279-296 (ELIK…KDYN), 309-325 (TLDE…NNII), 328-337 (HGNIGAGVDW), 353-369 (YDQR…QQVG), 371-381 (FTFEGAGRSDD), 385-400 (FGRH…WEFI), 403-417 (YRFI…KAPN), 434-443 (KSKQWEGAFE), 449-458 (VNWRISGYRN), 473-490 (YYNE…TANF), 494-509 (PLTH…ARNA), 517-529 (RRAK…QLDW), and 535-550 (DWGI…YDKD). Threonine 309 is a binding site for cyanocob(III)alamin. Arginine 517 is a cyanocob(III)alamin binding site. Tyrosine 551 is a binding site for cyanocob(III)alamin. 3 beta stranded membrane passes run 558-572 (TVKM…LAVA), 585-596 (IANLFDKDYETV), and 602-614 (AGRE…SYTF). A TonB C-terminal box motif is present at residues 597 to 614 (YGYQTAGREYTLSGSYTF).

This sequence belongs to the TonB-dependent receptor family. BtuB (TC 1.B.14.3.1) subfamily.

It is found in the cell outer membrane. Functionally, involved in the active translocation of vitamin B12 (cyanocobalamin) across the outer membrane to the periplasmic space. It derives its energy for transport by interacting with the trans-periplasmic membrane protein TonB. In Escherichia coli O6:K15:H31 (strain 536 / UPEC), this protein is Vitamin B12 transporter BtuB.